The primary structure comprises 342 residues: WW domain binding protein 1-like (342 aa).

The helical transmembrane segment at 42–62 threads the bilayer; that stretch reads LWWFWLVWTIIIILSCCCVCH. Disordered regions lie at residues 133 to 247 and 292 to 320; these read LPPQ…RRFT and PGDE…RPPA. Positions 158 to 173 are enriched in low complexity; the sequence is SSPLSEPSRSSTRPPS. Phosphoserine is present on S173. Over residues 212 to 240 the composition is skewed to basic and acidic residues; it reads LDKDAECREELLKDDSSEHGAPDSKEKTP.

The protein localises to the membrane. The polypeptide is WW domain binding protein 1-like (WBP1L) (Homo sapiens (Human)).